The primary structure comprises 675 residues: Potassium-transporting ATPase ATP-binding subunit (675 aa).

4 consecutive transmembrane segments (helical) span residues 34–54 (IMFVVEVGMILTLILICFPDI), 65–85 (LITIFIILLITILFANFSEAF), 216–236 (IALFTLLTTLTIIFLVVIVTL), and 245–265 (LILPIAMLIALTVCLIPTTIG). Catalysis depends on D304, which acts as the 4-aspartylphosphate intermediate. ATP is bound by residues D341, E345, 372–379 (FTAETRMS), and K390. Residues D513 and D517 each contribute to the Mg(2+) site. Helical transmembrane passes span 569-591 (ALTTFSLANDVAKYFAILPALMM), 611-631 (AIISALIFNALIIVALIPIAM), and 644-664 (IFINNMLIYGLGGLIVPFLGI).

This sequence belongs to the cation transport ATPase (P-type) (TC 3.A.3) family. Type IA subfamily. As to quaternary structure, the system is composed of three essential subunits: KdpA, KdpB and KdpC.

Its subcellular location is the cell membrane. The catalysed reaction is K(+)(out) + ATP + H2O = K(+)(in) + ADP + phosphate + H(+). In terms of biological role, part of the high-affinity ATP-driven potassium transport (or Kdp) system, which catalyzes the hydrolysis of ATP coupled with the electrogenic transport of potassium into the cytoplasm. This subunit is responsible for energy coupling to the transport system and for the release of the potassium ions to the cytoplasm. This Staphylococcus aureus (strain MSSA476) protein is Potassium-transporting ATPase ATP-binding subunit.